Consider the following 527-residue polypeptide: Serine/threonine-protein kinase NLK (527 aa).

2 sufficient for interaction with DAPK3 regions span residues 1-125 (MSLC…KAHH) and 124-416 (HHHQ…SKRI). Required for interaction with TAB2 regions lie at residues 1-304 (MSLC…VVTQ) and 434-527 (YHTC…LVWE). 2 disordered regions span residues 22-72 (AAAA…SSAA) and 90-140 (QQPY…DIEP). Residues 26–54 (GHHHHHHHHLPHLPPPHLHHHHHPQHHLH) are compositionally biased toward basic residues. A compositionally biased stretch (low complexity) spans 103-119 (PGPAAAAPAQVQAAAAA). Over residues 122–131 (KAHHHQHSHH) the composition is skewed to basic residues. One can recognise a Protein kinase domain in the interval 138–427 (IEPDRPIGYG…AKDALAHPYL (290 aa)). Residues 144-152 (IGYGAFGVV) and Lys167 contribute to the ATP site. The Proton acceptor role is filled by Asp264. Thr298 is subject to Phosphothreonine; by autocatalysis. Residues 298 to 300 (TQE) carry the TQE motif. The segment at 428–527 (DEGRLRYHTC…EMPPSPLVWE (100 aa)) is required for homodimerization and kinase activation and localization to the nucleus. Ser522 is subject to Phosphoserine.

The protein belongs to the protein kinase superfamily. CMGC Ser/Thr protein kinase family. MAP kinase subfamily. As to quaternary structure, homodimer. Homodimerization is required for intermolecular autophosphorylation, kinase activation and nuclear localization. May interact with components of cullin-RING-based SCF (SKP1-CUL1-F-box protein) E3 ubiquitin-protein ligase complexes. Interacts with LEF1, MEF2A, MYBL1 and MYBL2. Interacts with the upstream activating kinases HIPK2 and MAP3K7/TAK1. Interaction with MAP3K7/TAK1 seems to be indirect, and may be mediated by other proteins such as STAT3, TAB1 and TAB2. Interacts with and phosphorylates a number of transcription factors including FOXO1, FOXO3, FOXO4, MYB, NOTCH1 and TCF7L2/TCF4. Interacts with DAPK3/ZIPK, and this interaction may disrupt interaction with transcription factors such as TCF7L2/TCF4. Interacts with RNF138/NARF. Interacts with ATF5; the interaction stabilizes ATF5 at the protein level in a kinase-independent manner. It depends on Mg(2+) as a cofactor. Post-translationally, phosphorylated on Thr-298. Intermolecular autophosphorylation on Thr-298 activates the enzyme.

Its subcellular location is the nucleus. It localises to the cytoplasm. It catalyses the reaction L-seryl-[protein] + ATP = O-phospho-L-seryl-[protein] + ADP + H(+). It carries out the reaction L-threonyl-[protein] + ATP = O-phospho-L-threonyl-[protein] + ADP + H(+). With respect to regulation, activated by dimerization and subsequent intermolecular autophosphorylation on Thr-298. Activated by the non-canonical Wnt signaling pathway, in which WNT5A treatment leads to activation of MAP3K7/TAK1 and HIPK2, which subsequently phosphorylates and activates this protein. Other cytokines such as IL6 may also activate this regulatory circuit. Functionally, serine/threonine-protein kinase that regulates a number of transcription factors with key roles in cell fate determination. Positive effector of the non-canonical Wnt signaling pathway, acting downstream of WNT5A, MAP3K7/TAK1 and HIPK2. Negative regulator of the canonical Wnt/beta-catenin signaling pathway. Binds to and phosphorylates TCF7L2/TCF4 and LEF1, promoting the dissociation of the TCF7L2/LEF1/beta-catenin complex from DNA, as well as the ubiquitination and subsequent proteolysis of LEF1. Together these effects inhibit the transcriptional activation of canonical Wnt/beta-catenin target genes. Negative regulator of the Notch signaling pathway. Binds to and phosphorylates NOTCH1, thereby preventing the formation of a transcriptionally active ternary complex of NOTCH1, RBPJ/RBPSUH and MAML1. Negative regulator of the MYB family of transcription factors. Phosphorylation of MYB leads to its subsequent proteolysis while phosphorylation of MYBL1 and MYBL2 inhibits their interaction with the coactivator CREBBP. Other transcription factors may also be inhibited by direct phosphorylation of CREBBP itself. Acts downstream of IL6 and MAP3K7/TAK1 to phosphorylate STAT3, which is in turn required for activation of NLK by MAP3K7/TAK1. Upon IL1B stimulus, cooperates with ATF5 to activate the transactivation activity of C/EBP subfamily members. Phosphorylates ATF5 but also stabilizes ATF5 protein levels in a kinase-independent manner. Acts as an inhibitor of the mTORC1 complex in response to osmotic stress by mediating phosphorylation of RPTOR, thereby preventing recruitment of the mTORC1 complex to lysosomes. This Homo sapiens (Human) protein is Serine/threonine-protein kinase NLK (NLK).